We begin with the raw amino-acid sequence, 415 residues long: Homoserine O-acetyltransferase (415 aa).

Positions 47–369 (NAVLVCHGLT…HGHDAFLVEP (323 aa)) constitute an AB hydrolase-1 domain. The active-site Nucleophile is Ser-155. Arg-226 provides a ligand contact to substrate. Active-site residues include Asp-329 and His-362. Asp-363 is a substrate binding site. Positions 383–415 (GVAGRAVTDTAPDGGEPDEDEDFAPVHSSLFSR) are disordered.

This sequence belongs to the AB hydrolase superfamily. MetX family. In terms of assembly, homodimer.

It is found in the cytoplasm. It catalyses the reaction L-homoserine + acetyl-CoA = O-acetyl-L-homoserine + CoA. It functions in the pathway amino-acid biosynthesis; L-methionine biosynthesis via de novo pathway; O-acetyl-L-homoserine from L-homoserine: step 1/1. Functionally, transfers an acetyl group from acetyl-CoA to L-homoserine, forming acetyl-L-homoserine. The chain is Homoserine O-acetyltransferase from Haloferax volcanii (strain ATCC 29605 / DSM 3757 / JCM 8879 / NBRC 14742 / NCIMB 2012 / VKM B-1768 / DS2) (Halobacterium volcanii).